A 1064-amino-acid polypeptide reads, in one-letter code: Alpha-aminoadipic semialdehyde synthase (1064 aa).

The segment at 24 to 445 (VNKWERRTPL…RACISYRGEL (422 aa)) is lysine-ketoglutarate reductase. Position 238 is a phosphothreonine (Thr-238). The residue at position 458 (Ser-458) is a Phosphoserine. The tract at residues 583 to 1064 (MTKKSGVLIL…YGIKLMEKAE (482 aa)) is saccharopine dehydrogenase. L-saccharopine is bound by residues 703–704 (SY), Asp-730, Arg-830, and 852–854 (TLR). 729 to 731 (LDP) lines the NADP(+) pocket.

In the N-terminal section; belongs to the AlaDH/PNT family. This sequence in the C-terminal section; belongs to the saccharopine dehydrogenase family. Homodimer. Post-translationally, phosphorylation of Ser-458 seems important for the LKR activity. Ubiquitous, with higher levels in flowers. Isoform Long is mostly present in young leaves, cotyledons, root tips and mature root parts. Whereas isoform Short is mostly expressed in cotyledons and at low levels in all root parts.

It localises to the cytoplasm. It catalyses the reaction L-saccharopine + NADP(+) + H2O = L-lysine + 2-oxoglutarate + NADPH + H(+). It carries out the reaction L-saccharopine + NAD(+) + H2O = (S)-2-amino-6-oxohexanoate + L-glutamate + NADH + H(+). It functions in the pathway amino-acid degradation; L-lysine degradation via saccharopine pathway; glutaryl-CoA from L-lysine: step 1/6. The protein operates within amino-acid degradation; L-lysine degradation via saccharopine pathway; glutaryl-CoA from L-lysine: step 2/6. With respect to regulation, the LKR activity is stimulated by NaCl. In terms of biological role, bifunctional enzyme that catalyzes the first two steps in lysine degradation. The N-terminal and the C-terminal contain lysine-oxoglutarate reductase and saccharopine dehydrogenase activity, respectively. Negatively regulates free Lys accumulation in seeds. This chain is Alpha-aminoadipic semialdehyde synthase (LKR/SDH), found in Arabidopsis thaliana (Mouse-ear cress).